An 864-amino-acid polypeptide reads, in one-letter code: Sine oculis-binding protein homolog (864 aa).

Residues 1-14 (MAEMEKEGRPPENK) are compositionally biased toward basic and acidic residues. Residues 1 to 25 (MAEMEKEGRPPENKRSRKPAHPVKR) form a disordered region. FCS-type zinc fingers lie at residues 142–180 (DEVS…KCFA) and 216–256 (FKNN…KCLN). Disordered stretches follow at residues 304 to 360 (LTDA…ETPS), 413 to 484 (RGPP…PGAP), and 550 to 616 (KPPN…RGRG). 2 stretches are compositionally biased toward low complexity: residues 314-335 (PVAA…VSPS) and 417-433 (HHAS…MLPG). The segment covering 460–484 (IHPPSTPTMPGNPPGLLPPPPPGAP) has biased composition (pro residues). 2 stretches are compositionally biased toward low complexity: residues 565–582 (SAPG…GRSL) and 590–603 (GSSK…GSSG). Residues 618 to 622 (VVDLT) carry the SUMO interaction motif 1 (SIM); mediates the binding to polysumoylated substrates motif. S627 carries the phosphoserine modification. The SUMO interaction motif 2 (SIM); mediates the binding to polysumoylated substrates motif lies at 648–652 (VIDLT). K672 participates in a covalent cross-link: Glycyl lysine isopeptide (Lys-Gly) (interchain with G-Cter in SUMO2). The residue at position 694 (S694) is a Phosphoserine. Positions 725-750 (APAEAKGAEPPPEQPPPPAPPKKLLS) are disordered. A compositionally biased stretch (pro residues) spans 733-745 (EPPPEQPPPPAPP).

Belongs to the SOBP family. Interacts (via SIM domains) with SUMO1 and SUMO2.

Its function is as follows. Implicated in development of the cochlea. The protein is Sine oculis-binding protein homolog of Rattus norvegicus (Rat).